The sequence spans 611 residues: MNKVGFFRSIQFKITLIYVLLIIIAMQIIGVYFVNQVEKSLISSYEQSLNQRIDNLSYYIEQEYKSDNDSTVIKDDVSRILNDFTKSDEVREISFVDKSYEVVGSSKPYGEEVAGKQTTDLIFKRIFSTKQSYLRKYYDPKSKIRVLISAKPVMTENQEVVGAIYVVASMEDVFNQMKTINTILASGTGLALVLTALLGIFLARTITHPLSDMRKQAMELAKGNFSRKVKKYGHDEIGQLATTFNHLTRELEDAQAMTEGERRKLASVIAYMTDGVIATNRNGAIILLNSPALELLNVSRETALEMPITSLLGLQENYTFEDLVEQQDSMLLEIERDDELTVLRVNFSVIQREHGKIDGLIAVIYDVTEQEKMDQERREFVANVSHELRTPLTTMRSYLEALAEGAWENKDIAPRFLMVTQNETERMIRLVNDLLQLSKFDSKDYQFNREWIQIVRFMSLIIDRFEMTKEQHVEFIRNLPDRDLYVEIDQDKITQVLDNIISNALKYSPEGGHVTFSIDVNEEEELLYISVKDEGIGIPKKDVEKVFDRFYRVDKARTRKLGGTGLGLAIAKEMVQAHGGDIWADSIEGKGTTITFTLPYKEEQEDDWDEA.

The Cytoplasmic portion of the chain corresponds to Met-1–Lys-13. A helical transmembrane segment spans residues Ile-14–Val-34. The Extracellular segment spans residues Asn-35–Thr-182. Residues Ile-183–Ala-203 traverse the membrane as a helical segment. The 53-residue stretch at Arg-204–Ala-256 folds into the HAMP domain. Over Arg-204–Ala-611 the chain is Cytoplasmic. One can recognise a PAS domain in the interval Arg-263–Val-324. The PAC domain occupies Glu-325–Glu-379. One can recognise a Histidine kinase domain in the interval Asn-383–Glu-602. Phosphohistidine; by autocatalysis is present on His-386.

Homodimer. Interacts with YycH and YycI. Post-translationally, autophosphorylated.

The protein resides in the cell membrane. The enzyme catalyses ATP + protein L-histidine = ADP + protein N-phospho-L-histidine.. In terms of biological role, member of the two-component regulatory system WalK/WalR involved in the regulation of the ftsAZ operon, the yocH and ykvT, cwlO, lytE, ydjM, yjeA, yoeB genes and the tagAB and tagDEF operons. Phosphorylates WalR. In Bacillus subtilis (strain 168), this protein is Sensor histidine kinase WalK.